Here is a 123-residue protein sequence, read N- to C-terminus: Putative membrane protein insertion efficiency factor (123 aa).

The segment at 1–23 (MGSCGGKHTGKGAPKPYSRNFTD) is disordered.

The protein belongs to the UPF0161 family.

It localises to the cell inner membrane. In terms of biological role, could be involved in insertion of integral membrane proteins into the membrane. This Brucella ovis (strain ATCC 25840 / 63/290 / NCTC 10512) protein is Putative membrane protein insertion efficiency factor.